Consider the following 245-residue polypeptide: Putative MSV199 domain-containing protein 146R (245 aa).

The GIY-YIG domain occupies 2–97; the sequence is RKGYIYVIEN…NTLHGKLKNL (96 aa).

The sequence is that of Putative MSV199 domain-containing protein 146R from Acheta domesticus (House cricket).